We begin with the raw amino-acid sequence, 224 residues long: Elongation factor 1-beta 2 (224 aa).

Residue alanine 2 is modified to N-acetylalanine. Residues 14–65 (VKSVEEHLAGKTYISGDQLSVDDVKVYAAVPVKPSDAFPNASKWYESVASQL) form the GST C-terminal domain. The disordered stretch occupies residues 89–139 (EAEAPAAAADDDDDMDLFGDETEEEKKAAEEREAAKKDTKKPKESGKSSVL). Residues 97 to 111 (ADDDDDMDLFGDETE) show a composition bias toward acidic residues. Residues 112-134 (EEKKAAEEREAAKKDTKKPKESG) are compositionally biased toward basic and acidic residues.

The protein belongs to the EF-1-beta/EF-1-delta family. EF-1 is composed of 4 subunits: alpha, beta (1B-alpha=beta'), delta (1B-beta), and gamma (1B-gamma).

EF-1-beta and EF-1-delta stimulate the exchange of GDP bound to EF-1-alpha to GTP. The polypeptide is Elongation factor 1-beta 2 (Arabidopsis thaliana (Mouse-ear cress)).